The primary structure comprises 603 residues: Adenine deaminase (603 aa).

Belongs to the metallo-dependent hydrolases superfamily. Adenine deaminase family. In terms of assembly, homodimer. Requires Mn(2+) as cofactor.

It carries out the reaction adenine + H2O + H(+) = hypoxanthine + NH4(+). The protein is Adenine deaminase of Klebsiella pneumoniae (strain 342).